Consider the following 185-residue polypeptide: Prenylated Rab acceptor protein 1 (185 aa).

The Cytoplasmic portion of the chain corresponds to 1 to 78 (MAAQKDQQKD…RNVEYYQSNY (78 aa)). A required for interaction with prenylated RAB3A and VAMP2 region spans residues 30–54 (AGREWLERRRATIRPWGTFVDQQRF). Helical transmembrane passes span 79–94 (VFVF…VTSP) and 95–112 (MLLV…ILYL). Residues 113–131 (RTLQSKLVLFGREVSPAHQ) are Cytoplasmic-facing. 2 consecutive transmembrane segments (helical) span residues 132–148 (YALA…LAGA) and 149–165 (GSAV…LIGS). Residues 165–185 (SHAAFHQMEPADGEELQMEPV) form a required for interaction with GDI1 region. Residues 166–185 (HAAFHQMEPADGEELQMEPV) are Cytoplasmic-facing. The interval 175–185 (ADGEELQMEPV) is required for interaction with prenylated RAB3A and VAMP2. Residues 175 to 185 (ADGEELQMEPV) form a homodimerization region.

This sequence belongs to the PRA1 family. Homodimer. Interacts with VAMP2 (synaptobrevin-2), GDI1, NRDG1 and PCLO. Interacts with prenylated Rab proteins (including RAB5 and RAB6), and with the members of the Ras superfamily HRAS, RHOA, TC21, and RAP1A.

The protein resides in the cell membrane. It localises to the cytoplasm. Its subcellular location is the golgi apparatus. It is found in the cytoplasmic vesicle. The protein localises to the secretory vesicle. The protein resides in the synaptic vesicle. Its function is as follows. General Rab protein regulator required for vesicle formation from the Golgi complex. May control vesicle docking and fusion by mediating the action of Rab GTPases to the SNARE complexes. In addition it inhibits the removal of Rab GTPases from the membrane by GDI1. This Mus musculus (Mouse) protein is Prenylated Rab acceptor protein 1 (Rabac1).